The sequence spans 226 residues: V-type proton ATPase subunit E (226 aa).

It belongs to the V-ATPase E subunit family. As to quaternary structure, V-ATPase is a heteromultimeric enzyme made up of two complexes: the ATP-hydrolytic V1 complex and the proton translocation V0 complex. The V1 complex consists of three catalytic AB heterodimers that form a heterohexamer, three peripheral stalks each consisting of EG heterodimers, one central rotor including subunits D and F, and the regulatory subunits C and H. The proton translocation complex V0 consists of the proton transport subunit a, a ring of proteolipid subunits c9c'', rotary subunit d, subunits e and f, and the accessory subunits VhaAC45 and ATP6AP2.

Subunit of the V1 complex of vacuolar(H+)-ATPase (V-ATPase), a multisubunit enzyme composed of a peripheral complex (V1) that hydrolyzes ATP and a membrane integral complex (V0) that translocates protons. V-ATPase is responsible for acidifying and maintaining the pH of intracellular compartments and in some cell types, is targeted to the plasma membrane, where it is responsible for acidifying the extracellular environment. In Manduca sexta (Tobacco hawkmoth), this protein is V-type proton ATPase subunit E (VHA26).